The following is a 331-amino-acid chain: Biotin synthase (331 aa).

A Radical SAM core domain is found at Gln51–Arg278. Residues Cys66, Cys70, and Cys73 each contribute to the [4Fe-4S] cluster site. [2Fe-2S] cluster contacts are provided by Cys110, Cys141, Cys201, and Arg273.

Belongs to the radical SAM superfamily. Biotin synthase family. In terms of assembly, homodimer. It depends on [4Fe-4S] cluster as a cofactor. The cofactor is [2Fe-2S] cluster.

It catalyses the reaction (4R,5S)-dethiobiotin + (sulfur carrier)-SH + 2 reduced [2Fe-2S]-[ferredoxin] + 2 S-adenosyl-L-methionine = (sulfur carrier)-H + biotin + 2 5'-deoxyadenosine + 2 L-methionine + 2 oxidized [2Fe-2S]-[ferredoxin]. Its pathway is cofactor biosynthesis; biotin biosynthesis; biotin from 7,8-diaminononanoate: step 2/2. Catalyzes the conversion of dethiobiotin (DTB) to biotin by the insertion of a sulfur atom into dethiobiotin via a radical-based mechanism. This Histophilus somni (strain 129Pt) (Haemophilus somnus) protein is Biotin synthase.